A 194-amino-acid polypeptide reads, in one-letter code: CMRF35-like molecule 5 (194 aa).

A signal peptide spans 1–18 (MWLSPSLLLLILPGYSIA). One can recognise an Ig-like V-type domain in the interval 19–125 (AKITGPTTVN…LGVKVQVTIN (107 aa)). Residues 19 to 165 (AKITGPTTVN…LTRSPLKSTH (147 aa)) lie on the Extracellular side of the membrane. Asparagine 28 is a glycosylation site (N-linked (GlcNAc...) asparagine). A disulfide bridge connects residues cysteine 39 and cysteine 107. Residues 166–186 (FLFLFLLELPLLLSMLGTVLW) traverse the membrane as a helical segment. The Cytoplasmic segment spans residues 187 to 194 (VNRPQRRS).

This sequence belongs to the CD300 family. Forms complexes with the CD300 family members with exception of CD300c. In terms of processing, N-glycosylated. Expression seems restricted to cells of myeloid lineage.

The protein resides in the cell membrane. The protein is CMRF35-like molecule 5 (CD300LD) of Homo sapiens (Human).